Consider the following 411-residue polypeptide: Glycogen synthase kinase-3 homolog MsK-2 (411 aa).

In terms of domain architecture, Protein kinase spans 74 to 358; it reads YMAERAVGQG…ALEALVHPFF (285 aa). ATP contacts are provided by residues 80-88 and lysine 103; that span reads VGQGSFGVV. Aspartate 199 (proton acceptor) is an active-site residue. At tyrosine 234 the chain carries Phosphotyrosine.

It belongs to the protein kinase superfamily. CMGC Ser/Thr protein kinase family. GSK-3 subfamily. Absent in leaves and petioles while a moderate expression is seen in the stems, roots, and nodes.

It catalyses the reaction L-seryl-[protein] + ATP = O-phospho-L-seryl-[protein] + ADP + H(+). The catalysed reaction is L-threonyl-[protein] + ATP = O-phospho-L-threonyl-[protein] + ADP + H(+). The sequence is that of Glycogen synthase kinase-3 homolog MsK-2 (MSK-2) from Medicago sativa (Alfalfa).